The chain runs to 69 residues: Sec-independent protein translocase protein TatA (69 aa).

Residues 1 to 21 (MFGLGGQELILILLIILLLFG) form a helical membrane-spanning segment.

The protein belongs to the TatA/E family. As to quaternary structure, forms a complex with TatC.

It localises to the cell inner membrane. Part of the twin-arginine translocation (Tat) system that transports large folded proteins containing a characteristic twin-arginine motif in their signal peptide across membranes. TatA could form the protein-conducting channel of the Tat system. The chain is Sec-independent protein translocase protein TatA from Chlorobium phaeovibrioides (strain DSM 265 / 1930) (Prosthecochloris vibrioformis (strain DSM 265)).